Here is a 241-residue protein sequence, read N- to C-terminus: MQHKSPVVTWDLFGLDIKFNLASILMVIITSLIVLVIAIACTRNLQKRPTGKQNFIEWVFDFVRGIIESNLAWKKGGQFHFLTVTLILFIFVGNMLGLPFAIVIDHTLWWKSPTADATVTLTLATMVILLTHYYGIKMRGTKNYFKNYGQPFLALTPVNIFEEFTNTLTLGLRLYGNIYAGEILIGLLSSLIIGHAAWGWIIGVPGLIAWQAFSIFIGTIQAYIFIMLSMVYMSHKIADDH.

The next 5 helical transmembrane spans lie at 21–41 (LASI…AIAC), 84–104 (VTLI…AIVI), 116–136 (DATV…YYGI), 183–203 (ILIG…WIIG), and 207–227 (LIAW…IFIM).

Belongs to the ATPase A chain family. In terms of assembly, F-type ATPases have 2 components, CF(1) - the catalytic core - and CF(0) - the membrane proton channel. CF(1) has five subunits: alpha(3), beta(3), gamma(1), delta(1), epsilon(1). CF(0) has three main subunits: a(1), b(2) and c(9-12). The alpha and beta chains form an alternating ring which encloses part of the gamma chain. CF(1) is attached to CF(0) by a central stalk formed by the gamma and epsilon chains, while a peripheral stalk is formed by the delta and b chains.

It localises to the cell membrane. Functionally, key component of the proton channel; it plays a direct role in the translocation of protons across the membrane. The sequence is that of ATP synthase subunit a from Staphylococcus carnosus (strain TM300).